Reading from the N-terminus, the 540-residue chain is 2,3-bisphosphoglycerate-independent phosphoglycerate mutase (540 aa).

Mn(2+) is bound by residues Asp-13 and Ser-63. Catalysis depends on Ser-63, which acts as the Phosphoserine intermediate. Residues His-124, 154 to 155, Arg-186, Arg-192, 262 to 265, and Lys-356 contribute to the substrate site; these read RD and RPDR. Residues Asp-423, His-427, Asp-464, His-465, and His-483 each contribute to the Mn(2+) site.

It belongs to the BPG-independent phosphoglycerate mutase family. In terms of assembly, monomer. Requires Mn(2+) as cofactor.

The enzyme catalyses (2R)-2-phosphoglycerate = (2R)-3-phosphoglycerate. It participates in carbohydrate degradation; glycolysis; pyruvate from D-glyceraldehyde 3-phosphate: step 3/5. Functionally, catalyzes the interconversion of 2-phosphoglycerate and 3-phosphoglycerate. The polypeptide is 2,3-bisphosphoglycerate-independent phosphoglycerate mutase (Chloroflexus aurantiacus (strain ATCC 29366 / DSM 635 / J-10-fl)).